Consider the following 397-residue polypeptide: uncharacterized protein (397 aa).

The next 4 membrane-spanning stretches (helical) occupy residues 62–79 (VLLF…LIAI), 92–109 (WYGL…LVVT), 135–154 (VVFL…STLS), and 167–189 (AFLK…FPGI).

Its subcellular location is the cell membrane. This is an uncharacterized protein from Archaeoglobus fulgidus (strain ATCC 49558 / DSM 4304 / JCM 9628 / NBRC 100126 / VC-16).